We begin with the raw amino-acid sequence, 346 residues long: Biotin synthase (346 aa).

The Radical SAM core domain occupies 38-256 (RQVQVSTLLS…IAVARIMMPT (219 aa)). [4Fe-4S] cluster is bound by residues C53, C57, and C60. 4 residues coordinate [2Fe-2S] cluster: C97, C128, C188, and R260.

Belongs to the radical SAM superfamily. Biotin synthase family. Homodimer. It depends on [4Fe-4S] cluster as a cofactor. [2Fe-2S] cluster is required as a cofactor.

It carries out the reaction (4R,5S)-dethiobiotin + (sulfur carrier)-SH + 2 reduced [2Fe-2S]-[ferredoxin] + 2 S-adenosyl-L-methionine = (sulfur carrier)-H + biotin + 2 5'-deoxyadenosine + 2 L-methionine + 2 oxidized [2Fe-2S]-[ferredoxin]. The protein operates within cofactor biosynthesis; biotin biosynthesis; biotin from 7,8-diaminononanoate: step 2/2. Catalyzes the conversion of dethiobiotin (DTB) to biotin by the insertion of a sulfur atom into dethiobiotin via a radical-based mechanism. The chain is Biotin synthase from Escherichia coli O6:K15:H31 (strain 536 / UPEC).